A 923-amino-acid chain; its full sequence is Glucosidase 2 subunit alpha (923 aa).

Residues 1–25 (MRYHGICWFIFQAAIIFAIFGSCQG) form the signal peptide. A glycan (N-linked (GlcNAc...) asparagine) is linked at Asn-262. The active-site Nucleophile is the Asp-524. Residue Glu-527 is part of the active site. A glycan (N-linked (GlcNAc...) asparagine) is linked at Asn-563. Residue Asp-600 is the Proton donor of the active site. Residue Asn-822 is glycosylated (N-linked (GlcNAc...) asparagine).

This sequence belongs to the glycosyl hydrolase 31 family. As to quaternary structure, heterodimer of a catalytic subunit alpha (gls2) and a subunit beta (gtb1).

The protein localises to the endoplasmic reticulum. The enzyme catalyses N(4)-(alpha-D-Glc-(1-&gt;3)-alpha-D-Man-(1-&gt;2)-alpha-D-Man-(1-&gt;2)-alpha-D-Man-(1-&gt;3)-[alpha-D-Man-(1-&gt;2)-alpha-D-Man-(1-&gt;3)-[alpha-D-Man-(1-&gt;2)-alpha-D-Man-(1-&gt;6)]-alpha-D-Man-(1-&gt;6)]-beta-D-Man-(1-&gt;4)-beta-D-GlcNAc-(1-&gt;4)-beta-D-GlcNAc)-L-asparaginyl-[protein] + H2O = N(4)-(alpha-D-Man-(1-&gt;2)-alpha-D-Man-(1-&gt;2)-alpha-D-Man-(1-&gt;3)-[alpha-D-Man-(1-&gt;2)-alpha-D-Man-(1-&gt;3)-[alpha-D-Man-(1-&gt;2)-alpha-D-Man-(1-&gt;6)]-alpha-D-Man-(1-&gt;6)]-beta-D-Man-(1-&gt;4)-beta-D-GlcNAc-(1-&gt;4)-beta-D-GlcNAc)-L-asparaginyl-[protein] (N-glucan mannose isomer 9A1,2,3B1,2,3) + beta-D-glucose. It carries out the reaction N(4)-(alpha-D-Glc-(1-&gt;3)-alpha-D-Glc-(1-&gt;3)-alpha-D-Man-(1-&gt;2)-alpha-D-Man-(1-&gt;2)-alpha-D-Man-(1-&gt;3)-[alpha-D-Man-(1-&gt;2)-alpha-D-Man-(1-&gt;3)-[alpha-D-Man-(1-&gt;2)-alpha-D-Man-(1-&gt;6)]-alpha-D-Man-(1-&gt;6)]-beta-D-Man-(1-&gt;4)-beta-D-GlcNAc-(1-&gt;4)-beta-D-GlcNAc)-L-asparaginyl-[protein] + H2O = N(4)-(alpha-D-Glc-(1-&gt;3)-alpha-D-Man-(1-&gt;2)-alpha-D-Man-(1-&gt;2)-alpha-D-Man-(1-&gt;3)-[alpha-D-Man-(1-&gt;2)-alpha-D-Man-(1-&gt;3)-[alpha-D-Man-(1-&gt;2)-alpha-D-Man-(1-&gt;6)]-alpha-D-Man-(1-&gt;6)]-beta-D-Man-(1-&gt;4)-beta-D-GlcNAc-(1-&gt;4)-beta-D-GlcNAc)-L-asparaginyl-[protein] + beta-D-glucose. The protein operates within glycan metabolism; N-glycan metabolism. In terms of biological role, catalytic subunit of glucosidase 2, which cleaves sequentially the 2 innermost alpha-1,3-linked glucose residues from the Glc(2)Man(9)GlcNAc(2) oligosaccharide precursor of immature glycoproteins. This Schizosaccharomyces pombe (strain 972 / ATCC 24843) (Fission yeast) protein is Glucosidase 2 subunit alpha.